Reading from the N-terminus, the 505-residue chain is L-carnitine/gamma-butyrobetaine antiporter (505 aa).

The next 12 helical transmembrane spans lie at 10 to 30 (IEPKVFFPPLIIVGILCWLTV), 51 to 71 (WGWAFEWYMVVMLFGWFWLVF), 92 to 112 (IFMMFASCTSAAVLFWGSIEI), 143 to 163 (GPLPWATYSFLSVAFAYFFFV), 195 to 215 (FYLVALIFAMGTSLGLATPLV), 231 to 251 (LDAIIITCWIILNAICVACGL), 263 to 283 (SYLSFLMLGWVFIVSGASFIM), 316 to 336 (WTVFYWAWWVIYAIQMSIFLA), 347 to 367 (LCFGMVMGLTASTWILWTVLG), 403 to 423 (LSTATMWGFFILCFIATVTLI), 446 to 466 (LLVRIGWSVLVGIIGIVLLAL), and 475 to 495 (AIIAGGCPLFFINIMVTLSFI).

It belongs to the BCCT transporter (TC 2.A.15) family. CaiT subfamily. Homotrimer.

Its subcellular location is the cell inner membrane. The enzyme catalyses 4-(trimethylamino)butanoate(in) + (R)-carnitine(out) = 4-(trimethylamino)butanoate(out) + (R)-carnitine(in). Its pathway is amine and polyamine metabolism; carnitine metabolism. In terms of biological role, catalyzes the exchange of L-carnitine for gamma-butyrobetaine. This is L-carnitine/gamma-butyrobetaine antiporter from Salmonella choleraesuis (strain SC-B67).